The primary structure comprises 84 residues: Large ribosomal subunit protein bL27 (84 aa).

The interval Met-1–Val-23 is disordered.

The protein belongs to the bacterial ribosomal protein bL27 family.

In Salinispora arenicola (strain CNS-205), this protein is Large ribosomal subunit protein bL27.